Consider the following 809-residue polypeptide: Phenylalanine--tRNA ligase beta subunit (809 aa).

One can recognise a tRNA-binding domain in the interval 39–152; sequence KDKWPNVYVG…ADAPVGMLAS (114 aa). The B5 domain occupies 404 to 492; that stretch reads KDRNSVVLSL…RIAGYDTIPC (89 aa). Mg(2+) contacts are provided by Asp-470, Asp-476, Glu-479, and Glu-480. An FDX-ACB domain is found at 717 to 808; sequence NRFPSVERDL…LNTETGAVLR (92 aa).

The protein belongs to the phenylalanyl-tRNA synthetase beta subunit family. Type 1 subfamily. As to quaternary structure, tetramer of two alpha and two beta subunits. Mg(2+) is required as a cofactor.

It is found in the cytoplasm. It carries out the reaction tRNA(Phe) + L-phenylalanine + ATP = L-phenylalanyl-tRNA(Phe) + AMP + diphosphate + H(+). The protein is Phenylalanine--tRNA ligase beta subunit of Dehalococcoides mccartyi (strain ATCC BAA-2266 / KCTC 15142 / 195) (Dehalococcoides ethenogenes (strain 195)).